Here is a 336-residue protein sequence, read N- to C-terminus: Uridine nucleosidase 1 (336 aa).

Active-site residues include aspartate 29 and histidine 260.

The protein belongs to the IUNH family. Homodimer. Component of the NSH heterocomplex made of URH1/NSH1 and URH2/NSH2 which exhibits strong xanthosine nucleosidase activity. Interacts with URH2. Expressed ubiquitously in leaves, flowers, stems, pollen cells, root tip meristem and root vasculature.

The protein localises to the cytoplasm. The catalysed reaction is uridine + H2O = D-ribose + uracil. It catalyses the reaction xanthosine + H2O = D-ribose + xanthine. The enzyme catalyses inosine + H2O = hypoxanthine + D-ribose. It carries out the reaction adenosine + H2O = D-ribose + adenine. Involved in purine and pyrimidine breakdown rather than in pyrimidine salvage, especially in response to dark stress. Together with URH2, required for efficient inosine and xanthosine hydrolytic activities. Unable to use cytidine as a substrate. Can use uridine, inosine, adenosine as well as the cytokinin derivative isopentenyladenine-riboside as substrates. Also hydrolyzes xanthosine with high efficiency. The sequence is that of Uridine nucleosidase 1 from Arabidopsis thaliana (Mouse-ear cress).